A 2531-amino-acid polypeptide reads, in one-letter code: Serine/threonine-protein kinase ATR (2531 aa).

An FAT domain is found at 1490 to 2067 (LIVKVAETFG…MWQSAYLLRQ (578 aa)). One can recognise a PI3K/PI4K catalytic domain in the interval 2192–2512 (FSDKVKVLHS…VSQLASSLIE (321 aa)). Residues 2198–2204 (VLHSNTK) form a G-loop region. The interval 2368–2376 (GLGDRHTKN) is catalytic loop. The activation loop stretch occupies residues 2387 to 2411 (HVDFDMIFNKGETLGTPELVPFRLT). The region spanning 2499–2531 (HPMQVSQLASSLIELATSEEKLSEMYLGWMATL) is the FATC domain.

It belongs to the PI3/PI4-kinase family. ATM subfamily. The cofactor is Mn(2+).

Its subcellular location is the nucleus. It carries out the reaction L-seryl-[protein] + ATP = O-phospho-L-seryl-[protein] + ADP + H(+). The catalysed reaction is L-threonyl-[protein] + ATP = O-phospho-L-threonyl-[protein] + ADP + H(+). In terms of biological role, serine/threonine protein kinase which activates checkpoint signaling upon genotoxic stresses such as ionizing radiation (IR), ultraviolet light (UV), or DNA replication stalling, thereby acting as a DNA damage sensor. Recognizes the substrate consensus sequence [ST]-Q. Phosphorylates various proteins, which collectively inhibits DNA replication and mitosis and promotes DNA repair and recombination. Prevents mitotic catastrophe by functioning in the S-phase checkpoint and cooperating with atm-1 in the checkpoint response to double-strand breaks (DSBs) after ionizing radiation (IR) to induce cell cycle arrest or apoptosis via the cep-1/p53 pathway. In response to ionizing radiation, probably required for the association between the brc-1-brd-1 heterodimer and rad-51 and let-70 in order to activate E3-ubiquitin ligase activity of the heterodimer and induce ubiquitination at DNA damage sites. In Caenorhabditis elegans, this protein is Serine/threonine-protein kinase ATR.